A 108-amino-acid chain; its full sequence is UPF0166 protein MJ1524 (108 aa).

The protein belongs to the UPF0166 family.

The protein is UPF0166 protein MJ1524 of Methanocaldococcus jannaschii (strain ATCC 43067 / DSM 2661 / JAL-1 / JCM 10045 / NBRC 100440) (Methanococcus jannaschii).